A 172-amino-acid chain; its full sequence is Large ribosomal subunit protein uL10 (172 aa).

This sequence belongs to the universal ribosomal protein uL10 family. In terms of assembly, part of the ribosomal stalk of the 50S ribosomal subunit. The N-terminus interacts with L11 and the large rRNA to form the base of the stalk. The C-terminus forms an elongated spine to which L12 dimers bind in a sequential fashion forming a multimeric L10(L12)X complex.

In terms of biological role, forms part of the ribosomal stalk, playing a central role in the interaction of the ribosome with GTP-bound translation factors. The polypeptide is Large ribosomal subunit protein uL10 (Methylorubrum extorquens (strain CM4 / NCIMB 13688) (Methylobacterium extorquens)).